The sequence spans 171 residues: MVNNRISESTTTAVSNNGSPPKACAGCGGKIADRFLLYSMDRYWHTRCLKCSCCQAQLGEIGTSCYTKSGMILCRNDYIRLFGNSGACNACGQSIPASEMVMRAQGSVYHLKCFTCATCRNRLVPGDRFHYVNGTIFCEHDRPTGLLNGHLNPLQSNPLQGSPMLPDQKVC.

A compositionally biased stretch (polar residues) spans 1–19 (MVNNRISESTTTAVSNNGS). The tract at residues 1–20 (MVNNRISESTTTAVSNNGSP) is disordered. LIM zinc-binding domains lie at 22-84 (KACA…LFGN) and 86-148 (GACN…GLLN).

Functionally, acts as a positive cofactor of GATA transcription factors to establish the identity of the ventral mesoderm during gastrulation. Down-regulation in the dorsal mesoderm is necessary for the proper formation of this territory since, when present, lmo4 may bind ldb1 and restrict the availability of this cofactor for Spemman organizer transcription factors. At neurula stages, suppresses primary neuron differentiation and modulates gene expression at the Isthmic Organizer of the midbrain-hindbrain boundary. This Xenopus laevis (African clawed frog) protein is LIM domain transcription factor LMO4-B (lmo4-b).